Here is an 82-residue protein sequence, read N- to C-terminus: Small ribosomal subunit protein bS18 (82 aa).

The disordered stretch occupies residues 1 to 20 (MSETSSAPVRRPFHRRRKTC).

It belongs to the bacterial ribosomal protein bS18 family. As to quaternary structure, part of the 30S ribosomal subunit. Forms a tight heterodimer with protein bS6.

Binds as a heterodimer with protein bS6 to the central domain of the 16S rRNA, where it helps stabilize the platform of the 30S subunit. This chain is Small ribosomal subunit protein bS18, found in Rhizobium johnstonii (strain DSM 114642 / LMG 32736 / 3841) (Rhizobium leguminosarum bv. viciae).